Reading from the N-terminus, the 148-residue chain is Lysozyme-like protein 6 (148 aa).

Positions 1–19 (MTSPLLISLASCLVAVNQA) are cleaved as a signal peptide. The 129-residue stretch at 20-148 (SLIGRCDLAK…SYWMTGCHLA (129 aa)) folds into the C-type lysozyme domain. 4 disulfide bridges follow: Cys-25–Cys-145, Cys-49–Cys-133, Cys-83–Cys-98, and Cys-94–Cys-112. Residues Glu-54 and Asp-71 contribute to the active site.

It belongs to the glycosyl hydrolase 22 family. In terms of assembly, monomer.

It localises to the secreted. Its subcellular location is the cell surface. It is found in the cell projection. The protein localises to the cilium. The protein resides in the flagellum. It carries out the reaction Hydrolysis of (1-&gt;4)-beta-linkages between N-acetylmuramic acid and N-acetyl-D-glucosamine residues in a peptidoglycan and between N-acetyl-D-glucosamine residues in chitodextrins.. Its function is as follows. May be involved sperm-egg plasma membrane adhesion and fusion during fertilization. Exhibits bacteriolytic activity in vitro against Micrococcus luteus and Staphylococcus aureus. Shows weak bacteriolytic activity against Gram-positive bacteria at physiological pH. Bacteriolytic activity is pH-dependent, with a maximum at around pH 5.6. This chain is Lysozyme-like protein 6 (LYZL6), found in Bos taurus (Bovine).